Reading from the N-terminus, the 1091-residue chain is Integrin alpha-6 (1091 aa).

Positions 1 to 23 (MAVAGQLCLLYLSAGLLARLGTA) are cleaved as a signal peptide. Over 24 to 1011 (FNLDTREDNV…FPSKTVAQYS (988 aa)) the chain is Extracellular. FG-GAP repeat units lie at residues 30-95 (EDNV…GPCT), 101-166 (NDAD…IEDD), 176-229 (DGRL…FFDM), 244-300 (DHDE…KSAH), 301-363 (LLPE…KWSN), 364-419 (VKPI…GIIT), and 420-479 (KPTQ…VTPN). The N-linked (GlcNAc...) asparagine glycan is linked to N78. 3 disulfide bridges follow: C86/C94, C131/C154, and C175/C188. N223 and N284 each carry an N-linked (GlcNAc...) asparagine glycan. Residues D324, N326, D328, and D332 each contribute to the Ca(2+) site. N370 is a glycosylation site (N-linked (GlcNAc...) asparagine). Ca(2+) is bound by residues D386, N388, D390, Y392, D394, D441, D443, N445, Y447, and D449. 4 disulfide bridges follow: C489–C496, C502–C562, C626–C632, and C726–C737. 3 N-linked (GlcNAc...) asparagine glycosylation sites follow: N731, N746, and N927. 2 cysteine pairs are disulfide-bonded: C881–C928 and C934–C939. N958 carries N-linked (GlcNAc...) asparagine glycosylation. A helical transmembrane segment spans residues 1012-1037 (GVAWWIILLAVLAGILMLALLVFLLW). The Cytoplasmic portion of the chain corresponds to 1038–1091 (KCGFFKRSRYDDSIPRYHAVRIRKEEREIKDEKHMDNLEKKQWITKWNENESYS). C1039 carries the S-palmitoyl cysteine; by DHHC3 lipid modification. Positions 1040 to 1044 (GFFKR) match the GFFKR motif motif. R1064 is modified (phosphoserine).

This sequence belongs to the integrin alpha chain family. As to quaternary structure, heterodimer of an alpha and a beta subunit. The alpha subunit is composed of a heavy and a light chain linked by a disulfide bond. Alpha-6 associates with either beta-1 (ITGB1) or beta-4 (ITGB4) to form ITGA6:ITGB1 and ITGA6:ITGB4, respectively. ITGA6:ITGB1 is found in a complex with CD9; interaction takes place in oocytes and is involved in sperm-egg fusion. ITGA6:ITGB4 is found in a ternary complex with NRG1 and ERBB3. ITGA6:ITGB4 is found in a ternary complex with IGF1 and IGF1R. ITGA6:ITGB4 interacts with IGF2. Interacts with ADAM9. Interacts with RAB21. Interacts with MDK. ITGA6:ITGB1 interacts with MDK; this interaction mediates MDK-induced neurite outgrowth. Interacts with CD82; this interaction down-regulates ITGA6-mediated cell adhesion. Isoforms containing segment A, but not segment B, are the major targets for PMA-induced phosphorylation. Phosphorylation occurs on 'Ser-1064' of isoform alpha-6X1A. Phosphorylation is not required for the induction of integrin alpha-6A/beta-1 high affinity but may reduce the affinity for ligand. In terms of processing, undergoes PLAU-mediated cleavage at residues Arg-595-596-Arg in a time-dependent manner to produce processed integrin alpha-6 (alpha6p). Post-translationally, palmitoylation by DHHC3 enhances stability and cell surface expression. Expressed at low levels in normal skin tissue with elevated levels in skin tumors.

It localises to the cell membrane. In terms of biological role, integrin alpha-6/beta-1 (ITGA6:ITGB1) is a receptor for laminin on platelets. Integrin alpha-6/beta-1 (ITGA6:ITGB1) is present in oocytes and is involved in sperm-egg fusion. Integrin alpha-6/beta-4 (ITGA6:ITGB4) is a receptor for laminin in epithelial cells and it plays a critical structural role in the hemidesmosome. ITGA6:ITGB4 binds to NRG1 (via EGF domain) and this binding is essential for NRG1-ERBB signaling. ITGA6:ITGB4 binds to IGF1 and this binding is essential for IGF1 signaling. ITGA6:ITGB4 binds to IGF2 and this binding is essential for IGF2 signaling. The polypeptide is Integrin alpha-6 (Itga6) (Mus musculus (Mouse)).